An 86-amino-acid polypeptide reads, in one-letter code: RQC P-site tRNA stabilizing factor (86 aa).

Positions 1–62 constitute an S4 RNA-binding domain; that stretch reads MRLDKFLKVS…QKLVTVQVNE (62 aa).

The protein belongs to the RqcP family. In terms of assembly, associates with stalled 50S ribosomal subunits. Binds to RqcH, 23S rRNA and the P-site tRNA. Does not require RqcH for association with 50S subunits. Crystallized 50S subunits are variously associated with an A/P-site tRNA with or without RqcH, as well as with P- and E-site tRNAs but no RqcH. Displaced from the 50S subunit by puromycin but not thiostrepton.

Its function is as follows. Key component of the ribosome quality control system (RQC), a ribosome-associated complex that mediates the extraction of incompletely synthesized nascent chains from stalled ribosomes and their subsequent degradation. RqcH recruits Ala-charged tRNA, and with RqcP directs the elongation of stalled nascent chains on 50S ribosomal subunits, leading to non-templated C-terminal alanine extensions (Ala tail). The Ala tail promotes nascent chain degradation. RqcP is associated with the translocation-like movement of the peptidyl-tRNA from the A-site into the P-site. RqcH, RqcP and charged tRNA(Ala) are necessary and sufficient to add an Ala tail to a model stalled nascent peptide; does not add Val. The protein is RQC P-site tRNA stabilizing factor of Bacillus subtilis (strain 168).